Consider the following 161-residue polypeptide: HMG1/2-like protein (161 aa).

Disordered stretches follow at residues 1–46, 60–91, and 113–161; these read MKGA…KRAP, FKQKNPKNKSVAAVGKAAGERWKSLSESEKAP, and GESA…DDDE. Composition is skewed to basic and acidic residues over residues 10–27 and 77–89; these read AKADAKLAVKSKGAEKPA and AGERWKSLSESEK. Positions 42 to 111 form a DNA-binding region, HMG box; it reads PKRAPSAFFV…EYNKAIAAYN (70 aa). The segment covering 114–123 has biased composition (low complexity); that stretch reads ESAAAAAPKK. Residues 145–161 show a composition bias toward acidic residues; that stretch reads NDDDDDEGSDEDEDDDE.

The protein belongs to the HMGB family.

Its subcellular location is the nucleus. The chain is HMG1/2-like protein from Triticum aestivum (Wheat).